We begin with the raw amino-acid sequence, 252 residues long: 5-oxoprolinase subunit A (252 aa).

It belongs to the LamB/PxpA family. As to quaternary structure, forms a complex composed of PxpA, PxpB and PxpC.

It carries out the reaction 5-oxo-L-proline + ATP + 2 H2O = L-glutamate + ADP + phosphate + H(+). Functionally, catalyzes the cleavage of 5-oxoproline to form L-glutamate coupled to the hydrolysis of ATP to ADP and inorganic phosphate. In Mycobacterium avium (strain 104), this protein is 5-oxoprolinase subunit A.